Here is a 303-residue protein sequence, read N- to C-terminus: tRNA pseudouridine synthase B (303 aa).

Residue Asp38 is the Nucleophile of the active site.

This sequence belongs to the pseudouridine synthase TruB family. Type 1 subfamily.

It catalyses the reaction uridine(55) in tRNA = pseudouridine(55) in tRNA. Responsible for synthesis of pseudouridine from uracil-55 in the psi GC loop of transfer RNAs. The protein is tRNA pseudouridine synthase B of Oceanobacillus iheyensis (strain DSM 14371 / CIP 107618 / JCM 11309 / KCTC 3954 / HTE831).